Reading from the N-terminus, the 377-residue chain is Methylthioribose-1-phosphate isomerase (377 aa).

The active-site Proton donor is the Asp-254.

Belongs to the eIF-2B alpha/beta/delta subunits family. MtnA subfamily.

It localises to the cytoplasm. It is found in the nucleus. It carries out the reaction 5-(methylsulfanyl)-alpha-D-ribose 1-phosphate = 5-(methylsulfanyl)-D-ribulose 1-phosphate. It functions in the pathway amino-acid biosynthesis; L-methionine biosynthesis via salvage pathway; L-methionine from S-methyl-5-thio-alpha-D-ribose 1-phosphate: step 1/6. Functionally, catalyzes the interconversion of methylthioribose-1-phosphate (MTR-1-P) into methylthioribulose-1-phosphate (MTRu-1-P). This chain is Methylthioribose-1-phosphate isomerase (mri1), found in Aspergillus terreus (strain NIH 2624 / FGSC A1156).